The following is a 907-amino-acid chain: Epidermal growth factor receptor substrate 15-like 1 (907 aa).

Residue Ala2 is modified to N-acetylalanine. One can recognise an EH 1 domain in the interval 15–104; that stretch reads GNPLYESYYK…SLTMPPPKFH (90 aa). The tract at residues 15 to 368 is interaction with DAB2; the sequence is GNPLYESYYK…PSERGTPIPD (354 aa). Positions 48–83 constitute an EF-hand 1 domain; the sequence is LSDIILGKIWDLADPEGKGFLDKQGFYVALRLVACA. The residue at position 74 (Tyr74) is a Phosphotyrosine. Ser107 and Ser108 each carry phosphoserine. Positions 127-215 constitute an EH 2 domain; sequence EKAKFDGIFE…PPLIPPSKRK (89 aa). Positions 159–194 constitute an EF-hand 2 domain; the sequence is LPLDVLGRVWDLSDIDKDGHLDRDEFAVAMHLVYRA. Residues Asp172, Asp174, Asp176, His178, and Glu183 each coordinate Ca(2+). Phosphoserine is present on residues Ser229, Ser244, Ser253, Ser255, and Ser259. The segment at 229–260 is disordered; the sequence is SPPPKDSLRSTPSHGSVSSLNSTGSLSPKHSV. Low complexity predominate over residues 241-255; the sequence is SHGSVSSLNSTGSLS. EF-hand domains lie at 272 to 307 and 308 to 341; these read ADKM…SGLT and QNLL…IQQK. In terms of domain architecture, EH 3 spans 273–363; that stretch reads DKMRFDEIFL…PDMVPPSERG (91 aa). Ser360 is modified (phosphoserine). At Thr364 the chain carries Phosphothreonine. Ser369 and Ser375 each carry phosphoserine. A coiled-coil region spans residues 384–551; it reads LDDISQEIAQ…RSKLSQLQES (168 aa). Ser558 carries the phosphoserine modification. Tyr562 is modified (phosphotyrosine). Residue Ser610 is modified to Phosphoserine. A disordered region spans residues 611–860; that stretch reads QELHPDPFQA…SSSGFADFTS (250 aa). Basic and acidic residues predominate over residues 622-636; the sequence is DPFKSDPFKGADPFK. Over residues 643–652 the composition is skewed to polar residues; sequence DPFSEQQTAA. Phosphoserine occurs at positions 664, 670, 695, 715, and 732. Over residues 682–696 the composition is skewed to polar residues; sequence NDPFTSDPFTKNPSL. Low complexity predominate over residues 703–743; the sequence is FESSDPFSSSSISSKGSDPFGTLDPFGSSSFSSAEGFADFS. Pro residues predominate over residues 776 to 790; sequence ALPPKKPAPPRPKPP. Ser791 carries the phosphoserine modification. The segment covering 791-802 has biased composition (polar residues); that stretch reads SGQSTPVSQLGS. Thr795 bears the Phosphothreonine mark. Positions 840 to 853 are enriched in low complexity; the sequence is APSSSAKPPKTSSS. UIM domains follow at residues 863–882 and 889–907; these read NEEQ…EQER and QEQE…DMPA.

Interacts with EPS15, AGFG1/HRB and AGFG2/HRBL. Associates with the clathrin-associated adapter protein complex 2 (AP-2). Interacts with FCHO1. Interacts with FCHO2. Interacts (via EH domains) with DAB2. Interacts with UBQLN1 (via ubiquitin-like domain). Interacts with CAVIN3 (via leucine-zipper domain). Interacts with REPS2. Phosphorylated on tyrosine residues by EGFR.

It localises to the cell membrane. Its subcellular location is the nucleus. The protein resides in the membrane. It is found in the coated pit. Its function is as follows. Seems to be a constitutive component of clathrin-coated pits that is required for receptor-mediated endocytosis. Involved in endocytosis of integrin beta-1 (ITGB1) and transferrin receptor (TFR); internalization of ITGB1 as DAB2-dependent cargo but not TFR seems to require association with DAB2. This Mus musculus (Mouse) protein is Epidermal growth factor receptor substrate 15-like 1 (Eps15l1).